Here is a 60-residue protein sequence, read N- to C-terminus: MAKHPVPKKKTSKARRDARRSHHALTPPTLVPCPECKAMKPPHTVCPECGYYAGRKVLEV.

Basic residues predominate over residues 1–23; sequence MAKHPVPKKKTSKARRDARRSHH. The tract at residues 1-30 is disordered; it reads MAKHPVPKKKTSKARRDARRSHHALTPPTL.

Part of the 50S ribosomal subunit.

Found on the solvent side of the large subunit. In Thermus thermophilus (strain ATCC 27634 / DSM 579 / HB8), this protein is Large ribosomal subunit protein bL32 (rpmF).